The sequence spans 521 residues: Glutamyl-tRNA(Gln) amidotransferase subunit A, mitochondrial (521 aa).

Catalysis depends on charge relay system residues K61 and S139. The Acyl-ester intermediate role is filled by S163.

This sequence belongs to the amidase family. GatA subfamily. Subunit of the heterotrimeric GatCAB amidotransferase (AdT) complex, composed of A, B and C subunits.

Its subcellular location is the mitochondrion. It carries out the reaction L-glutamyl-tRNA(Gln) + L-glutamine + ATP + H2O = L-glutaminyl-tRNA(Gln) + L-glutamate + ADP + phosphate + H(+). Allows the formation of correctly charged Gln-tRNA(Gln) through the transamidation of misacylated Glu-tRNA(Gln) in the mitochondria. The reaction takes place in the presence of glutamine and ATP through an activated gamma-phospho-Glu-tRNA(Gln). The polypeptide is Glutamyl-tRNA(Gln) amidotransferase subunit A, mitochondrial (Ajellomyces capsulatus (strain G186AR / H82 / ATCC MYA-2454 / RMSCC 2432) (Darling's disease fungus)).